The sequence spans 260 residues: MVKFYDREFGSRLLIGSALYPSPAIMQDSIRESGAEIVTVSLRRETAGGKAGDQFWSLIRELGVTVLPNTAGCRGVRDAVTTAKLARELFATSWIKLEVIADNDTLQPDVVGLVEAAQILIKDGFEVFPYCTEDLSVALRLVDAGCRVIMPWAAPIGSARGITNRDALKLLRDRLPDITLVVDAGLGAPSHAAEAMELGYDAVLLNTAIAKAEDPVAMARGFKLAIEAGRTGFEAGLMGARDFASPSTPVIGTPFWHAVS.

Residue K96 is the Schiff-base intermediate with DXP of the active site. Residues G157, 184 to 185 (AG), and 206 to 207 (NT) contribute to the 1-deoxy-D-xylulose 5-phosphate site.

The protein belongs to the ThiG family. Homotetramer. Forms heterodimers with either ThiH or ThiS.

It is found in the cytoplasm. The enzyme catalyses [ThiS sulfur-carrier protein]-C-terminal-Gly-aminoethanethioate + 2-iminoacetate + 1-deoxy-D-xylulose 5-phosphate = [ThiS sulfur-carrier protein]-C-terminal Gly-Gly + 2-[(2R,5Z)-2-carboxy-4-methylthiazol-5(2H)-ylidene]ethyl phosphate + 2 H2O + H(+). Its pathway is cofactor biosynthesis; thiamine diphosphate biosynthesis. Functionally, catalyzes the rearrangement of 1-deoxy-D-xylulose 5-phosphate (DXP) to produce the thiazole phosphate moiety of thiamine. Sulfur is provided by the thiocarboxylate moiety of the carrier protein ThiS. In vitro, sulfur can be provided by H(2)S. This is Thiazole synthase from Rhodopseudomonas palustris (strain TIE-1).